The following is a 527-amino-acid chain: Tubulin-specific chaperone E (527 aa).

N-acetylserine is present on S2. The CAP-Gly domain occupies 27-71 (GVVPPVAGPWLGVEWDNPERGKHDGSHEGTVYFQCRHPTGGSFIR). 7 LRR repeats span residues 154–175 (NIRKVDLSKNLLSSWDEVIHIA), 180–200 (HLEVLNVSENKLKFPSGSVLT), 205–226 (ALKVLVLNQTGITWAEVLRCAM), 230–252 (GLEELYLESNNIFISERPTDVLQ), 253–274 (TVKLLDLSSNQLIDENQLYLIA), 278–299 (RLEQLILSDIGISSLHFPDAGI), and 308–329 (SLKYLVVNDNQISQWSFFNELD). Residues 342-384 (NPLTKEDKEAETARLLIIASIGQLKTLNKCEILPEERRRAELD) form the LRRCT domain. The residue at position 463 (K463) is an N6-acetyllysine. At S495 the chain carries Phosphoserine.

It belongs to the TBCE family. In terms of assembly, supercomplex made of cofactors A to E. Cofactors A and D function by capturing and stabilizing tubulin in a quasi-native conformation. Cofactor E binds to the cofactor D-tubulin complex; interaction with cofactor C then causes the release of tubulin polypeptides that are committed to the native state. Cofactors B and E can form a heterodimer which binds to alpha-tubulin and enhances their ability to dissociate tubulin heterodimers. Interacts with TBCD.

The protein resides in the cytoplasm. The protein localises to the cytoskeleton. Its function is as follows. Tubulin-folding protein; involved in the second step of the tubulin folding pathway and in the regulation of tubulin heterodimer dissociation. Required for correct organization of microtubule cytoskeleton and mitotic splindle, and maintenance of the neuronal microtubule network. This Pongo abelii (Sumatran orangutan) protein is Tubulin-specific chaperone E (TBCE).